The following is a 1063-amino-acid chain: MFERIISFAIQQRWLVLLAVFGMAGLGIFSYNRLPIDAVPDITNVQVQVNTSAPGYSPLETEQRATYPIEVVMAGLPGLEQTRSLSRYGLSQVTVIFKDGTDVYFARQLVNQRIQEAKDNLPEGVVPAMGPISTGLGEIYLWTVEAEEGARKADGTAYTPTDLREIQDWVVRPQLRNVPGVTEINTIGGFNKQYLVAPSLERLASYGLTLTDVVNALNKNNDNVGAGYIERRGEQYLVRAPGQVASEDDIRNIIVGTAQGQPIRIRDIGDVEIGKELRTGAATENGKEVVLGTVFMLIGENSRAVSKAVDEKVASINRTMPEGVKIVTVYDRTRLVDKAIATVKKNLLEGAVLVIVILFLFLGNIRAALITATIIPLAMLFTFTGMVNYKISANLMSLGALDFGIIIDGAVVIVENCVRRLAHAQEHHGRPLTRSERFHEVFAAAKEARRPLIFGQLIIMIVYLPIFALTGVEGKMFHPMAFTVVLALLGAMILSVTFVPAAVALFIGERVAEKENRLMLWAKRRYEPLLEKSLANTAVVLTFAAVSIVLCVAIAARLGSEFIPNLNEGDIAIQALRIPGTSLSQSVEMQKTIETTLKAKFPEIERVFARTGTAEIASDLMPPNISDGYIMLKPEKDWPEPKKTHAELLSAIQEEAGKIPGNNYEFSQPIQLRFNELISGVRSDVAVKIFGDDNNVLSETAKKVSAVLQGIPGAQEVKVEQTTGLPMLTVKIDREKAARYGLNMSDVQDAVATGVGGRDSGTFFQGDRRFDIVVRLPEAVRGEVEALRRLPIPLPKGVDARTTFIPLSEVATLEMAPGPNQISRENGKRRIVISANVRGRDIGSFVPEAEAAIQSQVKIPAGYWMTWGGTFEQLQSATTRLQVVVPVALLLVFVLLFAMFNNIKDGLLVFTGIPFALTGGILALWIRGIPMSITAAVGFIALCGVAVLNGLVMLSFIRSLREEGHSLDSAVRVGALTRLRPVLMTALVASLGFVPMAIATGTGAEVQRPLATVVIGGILSSTALTLLVLPVLYRLAHRKDEDAEDTREPVTQTHQPDQGRQPA.

A run of 12 helical transmembrane segments spans residues 14–34 (WLVL…YNRL), 350–370 (GAVL…AALI), 371–391 (TATI…NYKI), 395–415 (LMSL…VIVE), 452–472 (LIFG…LTGV), 487–507 (ALLG…ALFI), 534–554 (LANT…CVAI), 883–903 (VVVP…FNNI), 906–926 (GLLV…ALWI), 937–957 (VGFI…LSFI), 981–1001 (PVLM…IATG), and 1013–1033 (VVIG…PVLY). The disordered stretch occupies residues 1040–1063 (DEDAEDTREPVTQTHQPDQGRQPA). Over residues 1049-1063 (PVTQTHQPDQGRQPA) the composition is skewed to polar residues.

It belongs to the resistance-nodulation-cell division (RND) (TC 2.A.6) family.

It localises to the cell inner membrane. Has a low cation transport activity for cobalt, it is essential for the expression of cobalt, zinc, and cadmium resistance. CzcA and CzcB together would act in zinc efflux nearly as effectively as the complete CZC efflux system (CzcABC). The sequence is that of Cobalt-zinc-cadmium resistance protein CzcA (czcA) from Cupriavidus metallidurans (strain ATCC 43123 / DSM 2839 / NBRC 102507 / CH34) (Ralstonia metallidurans).